The primary structure comprises 44 residues: Protein PsbN (44 aa).

The chain crosses the membrane as a helical span at residues 6–26 (FFFTIFLWFFLLSITAYSIYV).

The protein belongs to the PsbN family.

It is found in the plastid. It localises to the chloroplast thylakoid membrane. Its function is as follows. May play a role in photosystem I and II biogenesis. The protein is Protein PsbN of Stigeoclonium helveticum (Green alga).